The following is an 873-amino-acid chain: Bifunctional uridylyltransferase/uridylyl-removing enzyme (873 aa).

Residues 1–332 are uridylyltransferase; it reads MKYLSPLSLS…HQGEQDDAII (332 aa). The tract at residues 333–692 is uridylyl-removing; that stretch reads IDDDFQRRGR…ISKNASRGGT (360 aa). The HD domain occupies 451 to 573; that stretch reads VDEHSIRLLK…VRDEERLDYL (123 aa). ACT domains lie at 693 to 777 and 800 to 873; these read EIFV…RPPR and LMEF…RLSS.

It belongs to the GlnD family. It depends on Mg(2+) as a cofactor.

It carries out the reaction [protein-PII]-L-tyrosine + UTP = [protein-PII]-uridylyl-L-tyrosine + diphosphate. It catalyses the reaction [protein-PII]-uridylyl-L-tyrosine + H2O = [protein-PII]-L-tyrosine + UMP + H(+). Its activity is regulated as follows. Uridylyltransferase (UTase) activity is inhibited by glutamine, while glutamine activates uridylyl-removing (UR) activity. Functionally, modifies, by uridylylation and deuridylylation, the PII regulatory proteins (GlnB and homologs), in response to the nitrogen status of the cell that GlnD senses through the glutamine level. Under low glutamine levels, catalyzes the conversion of the PII proteins and UTP to PII-UMP and PPi, while under higher glutamine levels, GlnD hydrolyzes PII-UMP to PII and UMP (deuridylylation). Thus, controls uridylylation state and activity of the PII proteins, and plays an important role in the regulation of nitrogen assimilation and metabolism. The sequence is that of Bifunctional uridylyltransferase/uridylyl-removing enzyme from Aliivibrio fischeri (strain MJ11) (Vibrio fischeri).